The following is a 229-amino-acid chain: Putative N-acetylmannosamine-6-phosphate 2-epimerase (229 aa).

It belongs to the NanE family.

The enzyme catalyses an N-acyl-D-glucosamine 6-phosphate = an N-acyl-D-mannosamine 6-phosphate. It functions in the pathway amino-sugar metabolism; N-acetylneuraminate degradation; D-fructose 6-phosphate from N-acetylneuraminate: step 3/5. Its function is as follows. Converts N-acetylmannosamine-6-phosphate (ManNAc-6-P) to N-acetylglucosamine-6-phosphate (GlcNAc-6-P). In Cutibacterium acnes (strain DSM 16379 / KPA171202) (Propionibacterium acnes), this protein is Putative N-acetylmannosamine-6-phosphate 2-epimerase.